A 784-amino-acid polypeptide reads, in one-letter code: Protein Skeletor, isoforms B/C (784 aa).

Residues 1-28 (MLAMKDKPWLLLFGLLAALSCLASFGDA) form the signal peptide. 2 consecutive DM13 domains span residues 34-143 (GTKI…VSIP) and 151-258 (PQKI…VRLP). Positions 287-419 (LAFEVRWAVA…GAESVVWAIG (133 aa)) constitute a DOMON domain. The segment at 451 to 491 (PLPEGARGNSNSSEQEDSAPAAQSSTGGAGYPPAGRPNVEP) is disordered.

As to quaternary structure, interacts with Chro and Mgtor as part of a macromolecular complex forming the spindle matrix. Chro colocalizes with Skeletor (Skel) on the chromosomes at interphase and on spindle during metaphase.

It is found in the cytoplasm. It localises to the cytoskeleton. The protein resides in the spindle. The protein localises to the nucleus. Its subcellular location is the nucleolus. It is found in the chromosome. Functionally, provides structural support to stabilize and organize the microtubule spindle during mitosis (within embryonic somatic cells) and meiosis (within spermatocytes). The role in mitosis regulation depends on the Ran pathway. In Drosophila melanogaster (Fruit fly), this protein is Protein Skeletor, isoforms B/C.